We begin with the raw amino-acid sequence, 310 residues long: Ninja-family protein 3 (310 aa).

3 disordered regions span residues 1-29 (MASR…GEPD), 68-140 (SLPG…DDAQ), and 156-215 (DQGN…EQPP). Residues 99–108 (ERWRRREMQS) are compositionally biased toward basic and acidic residues. Polar residues-rich tracts occupy residues 156–166 (DQGNASSSMPE) and 176–193 (KSTS…QNKS).

It belongs to the Ninja family.

It is found in the nucleus. This Triticum aestivum (Wheat) protein is Ninja-family protein 3 (AFP-D1).